We begin with the raw amino-acid sequence, 256 residues long: Thiazole synthase (256 aa).

The active-site Schiff-base intermediate with DXP is the Lys96. 1-deoxy-D-xylulose 5-phosphate is bound by residues Gly157, 183–184, and 205–206; these read AG and NT.

The protein belongs to the ThiG family. In terms of assembly, homotetramer. Forms heterodimers with either ThiH or ThiS.

The protein localises to the cytoplasm. The catalysed reaction is [ThiS sulfur-carrier protein]-C-terminal-Gly-aminoethanethioate + 2-iminoacetate + 1-deoxy-D-xylulose 5-phosphate = [ThiS sulfur-carrier protein]-C-terminal Gly-Gly + 2-[(2R,5Z)-2-carboxy-4-methylthiazol-5(2H)-ylidene]ethyl phosphate + 2 H2O + H(+). Its pathway is cofactor biosynthesis; thiamine diphosphate biosynthesis. In terms of biological role, catalyzes the rearrangement of 1-deoxy-D-xylulose 5-phosphate (DXP) to produce the thiazole phosphate moiety of thiamine. Sulfur is provided by the thiocarboxylate moiety of the carrier protein ThiS. In vitro, sulfur can be provided by H(2)S. The chain is Thiazole synthase from Bacillus cytotoxicus (strain DSM 22905 / CIP 110041 / 391-98 / NVH 391-98).